A 421-amino-acid chain; its full sequence is Histidine--tRNA ligase (421 aa).

It belongs to the class-II aminoacyl-tRNA synthetase family. In terms of assembly, homodimer.

It is found in the cytoplasm. It carries out the reaction tRNA(His) + L-histidine + ATP = L-histidyl-tRNA(His) + AMP + diphosphate + H(+). In Francisella tularensis subsp. mediasiatica (strain FSC147), this protein is Histidine--tRNA ligase.